The primary structure comprises 346 residues: D-alanine--D-alanine ligase (346 aa).

The ATP-grasp domain maps to 133-327 (KLYAKSVGVK…ALADQISLEK (195 aa)). 159–211 (LSFPCIIKPARLGSSIGISIVKDEKDLEYAKDVGFEFDNDLVVEEFKNNIKEY) is a binding site for ATP. Mg(2+) is bound by residues aspartate 284, glutamate 296, and asparagine 298.

It belongs to the D-alanine--D-alanine ligase family. It depends on Mg(2+) as a cofactor. Mn(2+) is required as a cofactor.

The protein resides in the cytoplasm. The catalysed reaction is 2 D-alanine + ATP = D-alanyl-D-alanine + ADP + phosphate + H(+). Its pathway is cell wall biogenesis; peptidoglycan biosynthesis. In terms of biological role, cell wall formation. The chain is D-alanine--D-alanine ligase from Campylobacter jejuni subsp. jejuni serotype O:6 (strain 81116 / NCTC 11828).